The chain runs to 308 residues: Sulfoquinovosyl glycerol transport system permease protein SmoG (308 aa).

Transmembrane regions (helical) follow at residues 28 to 48 (LAVLLLAPAAILLSLIIVYPV), 92 to 112 (VLITLITVPGALFMGLGLALL), 126 to 146 (SLLIPWALPLSFAGLIFAWFF), 164 to 184 (GIIWFNSPNWAFAAICLTIIW), 223 to 243 (ITLPLLKPSIVVALIFRTITA), and 279 to 299 (LGYGSALAVVMFALSMCVTAV). Residues 88-300 (TWNTVLITLI…ALSMCVTAVY (213 aa)) enclose the ABC transmembrane type-1 domain.

It belongs to the binding-protein-dependent transport system permease family. In terms of assembly, the complex is probably composed of two ATP-binding proteins (SmoE), two transmembrane proteins (SmoG and SmoH) and a solute-binding protein (SmoF).

The protein localises to the cell inner membrane. Functionally, part of the ABC transporter complex SmoEFGH involved in sulfoquinovosyl glycerol (SQGro) uptake. Responsible for the translocation of the substrate across the membrane. This chain is Sulfoquinovosyl glycerol transport system permease protein SmoG, found in Agrobacterium fabrum (strain C58 / ATCC 33970) (Agrobacterium tumefaciens (strain C58)).